We begin with the raw amino-acid sequence, 66 residues long: Small ribosomal subunit protein bS21 (66 aa).

The protein belongs to the bacterial ribosomal protein bS21 family.

This chain is Small ribosomal subunit protein bS21, found in Bdellovibrio bacteriovorus (strain ATCC 15356 / DSM 50701 / NCIMB 9529 / HD100).